Here is a 236-residue protein sequence, read N- to C-terminus: Small ribosomal subunit protein uS2c (236 aa).

This sequence belongs to the universal ribosomal protein uS2 family.

It is found in the plastid. The protein resides in the chloroplast. The chain is Small ribosomal subunit protein uS2c (rps2) from Oryza nivara (Indian wild rice).